The following is a 25-amino-acid chain: Inorganic pyrophosphatase (25 aa).

As to quaternary structure, monomer. Mg(2+) serves as cofactor.

The catalysed reaction is diphosphate + H2O = 2 phosphate + H(+). In Cyanophora paradoxa, this protein is Inorganic pyrophosphatase.